The primary structure comprises 108 residues: MIKTTLLFFATALCEIIGCFLPWLWLKRNASIWLLLPAGISLALFVWLLTLHPAASGRVYAAYGGVYVCTALMWLRVVDGVKLTLYDWTGALIALCGMLIIVAGWGRT.

At 1–5 (MIKTT) the chain is on the periplasmic side. Residues 6-26 (LLFFATALCEIIGCFLPWLWL) form a helical membrane-spanning segment. The Cytoplasmic portion of the chain corresponds to 27–30 (KRNA). Residues 31–51 (SIWLLLPAGISLALFVWLLTL) form a helical membrane-spanning segment. The Periplasmic segment spans residues 52-60 (HPAASGRVY). A helical membrane pass occupies residues 61 to 81 (AAYGGVYVCTALMWLRVVDGV). Over 82-84 (KLT) the chain is Cytoplasmic. The chain crosses the membrane as a helical span at residues 85-105 (LYDWTGALIALCGMLIIVAGW). Residues 106 to 108 (GRT) lie on the Periplasmic side of the membrane.

The protein belongs to the UPF0060 family.

The protein localises to the cell inner membrane. The polypeptide is UPF0060 membrane protein YnfA (Escherichia coli O139:H28 (strain E24377A / ETEC)).